Here is a 194-residue protein sequence, read N- to C-terminus: uncharacterized protein (194 aa).

Disordered stretches follow at residues Met-1–Glu-72 and Val-113–Val-194. Residues Ala-26 to Ala-39 show a composition bias toward basic and acidic residues. Over residues Gly-146–Arg-171 the composition is skewed to polar residues.

This is an uncharacterized protein from Homo sapiens (Human).